Reading from the N-terminus, the 172-residue chain is Stellate orphon protein at 12D (172 aa).

It belongs to the casein kinase 2 subunit beta family. In terms of assembly, interacts in vitro with the casein kinase 2 alpha subunit (CkII-alpha). The relevance of such interaction is however unclear in vivo. Probably not expressed in wild-type flies. In males lacking the Y chromosome, it is testis-specific and constitutes the main component of star-shaped crystals.

Its function is as follows. Unknown. In males lacking the Y chromosome, its strong overexpression leads to the appearance of proteinaceous star-shaped crystals in the primary spermatocytes causing meiotic drive, possibly by interfering with normal casein kinase 2 activity. This Drosophila melanogaster (Fruit fly) protein is Stellate orphon protein at 12D (Ste12DOR).